Here is a 575-residue protein sequence, read N- to C-terminus: Amino-acid acetyltransferase, mitochondrial (575 aa).

The N-terminal 35 residues, 1–35 (MSKLRNLNRQFISNLKTHETVTNAKRNLILSILKS), are a transit peptide targeting the mitochondrion. Residues 398–557 (FTLNNLVQDG…QGIPGGVNIH (160 aa)) enclose the N-acetyltransferase domain.

This sequence belongs to the acetyltransferase family.

The protein resides in the mitochondrion. The catalysed reaction is L-glutamate + acetyl-CoA = N-acetyl-L-glutamate + CoA + H(+). It functions in the pathway amino-acid biosynthesis; L-arginine biosynthesis; N(2)-acetyl-L-ornithine from L-glutamate: step 1/4. In terms of biological role, N-acetylglutamate synthase involved in arginine biosynthesis. In Debaryomyces hansenii (strain ATCC 36239 / CBS 767 / BCRC 21394 / JCM 1990 / NBRC 0083 / IGC 2968) (Yeast), this protein is Amino-acid acetyltransferase, mitochondrial (ARG2).